We begin with the raw amino-acid sequence, 1040 residues long: DNA mismatch repair protein MutS (1040 aa).

The segment covering 1–10 has biased composition (polar residues); it reads MPVKPSAQNN. Disordered regions lie at residues 1–22 and 130–157; these read MPVK…SVPV and ATGT…SKST. Residues 11–22 are compositionally biased toward low complexity; sequence SPSKPTSKSVPV. The segment covering 130 to 143 has biased composition (polar residues); sequence ATGTDNANNPSNAP. 759 to 766 contributes to the ATP binding site; it reads GPNMGGKS.

Belongs to the DNA mismatch repair MutS family.

This protein is involved in the repair of mismatches in DNA. It is possible that it carries out the mismatch recognition step. This protein has a weak ATPase activity. This Psychrobacter cryohalolentis (strain ATCC BAA-1226 / DSM 17306 / VKM B-2378 / K5) protein is DNA mismatch repair protein MutS.